We begin with the raw amino-acid sequence, 809 residues long: Ubiquitin carboxyl-terminal hydrolase 1 (809 aa).

Residues 101–738 (AGLVNDGNTC…GVFMLFYEYD (638 aa)) enclose the USP domain. The active-site Nucleophile is the Cys-110. Residues 143–195 (NEHNEEGNGQESAQDEATHKKNTRKGGKVYGKHKKKLNRKSSSKEDEEKSQEP) are disordered. Residues 162 to 183 (KKNTRKGGKVYGKHKKKLNRKS) are compositionally biased toward basic residues. The span at 184-194 (SSKEDEEKSQE) shows a compositional bias: basic and acidic residues. Residues Ser-530, Ser-531, and Ser-555 each carry the phosphoserine modification. Residues 569–596 (ASHYNHTKDISNYDPLNGEVDGVTSDDE) are disordered. Phosphoserine is present on residues Ser-618 and Ser-638. Position 652 is a phosphothreonine (Thr-652). Phosphoserine occurs at positions 653, 654, and 670. His-697 (proton acceptor) is an active-site residue. The tract at residues 750-809 (LEAIQSNNEEDDEKEQEQKGVQEPKESQEQGEGEEQEEGQEQMKFERTEDHRDISGKDVN) is disordered. Ser-755 bears the Phosphoserine mark. A compositionally biased stretch (basic and acidic residues) spans 765–777 (QEQKGVQEPKESQ). Over residues 778-789 (EQGEGEEQEEGQ) the composition is skewed to acidic residues. A compositionally biased stretch (basic and acidic residues) spans 790–809 (EQMKFERTEDHRDISGKDVN).

Belongs to the peptidase C19 family.

It catalyses the reaction Thiol-dependent hydrolysis of ester, thioester, amide, peptide and isopeptide bonds formed by the C-terminal Gly of ubiquitin (a 76-residue protein attached to proteins as an intracellular targeting signal).. Functionally, has an ATP-independent isopeptidase activity, cleaving at the C-terminus of the ubiquitin moiety in natural or engineered linear fusion proteins, irrespective of their size or the presence of an N-terminal extension to ubiquitin. This is Ubiquitin carboxyl-terminal hydrolase 1 (UBP1) from Saccharomyces cerevisiae (strain ATCC 204508 / S288c) (Baker's yeast).